The chain runs to 143 residues: MEMLQGLLLLWLLLLNVGGVWTSREPLRPLCRPINATLAAENEACPVCVTFTTTICAGYCPSMMRVLPAALPPVPQPVCTYRELRFASVRLPGCPPGVDPVVSFPVALSCRCGPCRLSSSDCGGPRAQPLACDRPPLPGLLFL.

Residues methionine 1–threonine 22 form the signal peptide. Disulfide bonds link cysteine 31/cysteine 79, cysteine 45/cysteine 94, cysteine 48/cysteine 132, cysteine 56/cysteine 110, cysteine 60/cysteine 112, and cysteine 115/cysteine 122. A glycan (N-linked (GlcNAc...) asparagine) is linked at asparagine 35.

Belongs to the glycoprotein hormones subunit beta family. In terms of assembly, heterodimer of a common alpha chain and a unique beta chain which confers biological specificity to thyrotropin, lutropin, follitropin and gonadotropin.

It is found in the secreted. Its function is as follows. Promotes spermatogenesis and ovulation by stimulating the testes and ovaries to synthesize steroids. This is Lutropin subunit beta (LHB) from Felis catus (Cat).